Here is a 615-residue protein sequence, read N- to C-terminus: MDMDRGFYRKVDVPDHAHYVIAFFVLIIGVVGVTGNALVMYAFLCNKKLRTPPNYFIMNLAVSDFLMAITQSPIFFINSLFKEWIFGETGCRMYAFCGALFGITSMINLLAISLDRYIVITKPPQAIRWVSGRRTMVVILLVWLYSLAWSLAPLLGWSSYIPEGLMTSCTWDYVTSTPANKGYTLMLCCFVFFIPLGIISYCYLCMFLAIRSAGREIERLGTQVRKSTLMQQQTIKTEWKLTKVAFVVIIVYVHSWSPYACVTLIAWAGYGSHLSPYSKAVPAVIAKASAIYNPFIYAIIHSKYRDTLAEHVPCLYFLRQPPRKVSMSRAQSECSFRDSMVSRQSSASKTKFHRVSSTSTADTQVWSDVELDPMNHEGQSLRTSHSLGVLGRSKEHRGPPAQQNRQTRSSDTLEQATVADWRPPLTALRCDRNFLPQPTHPPYKMAAATPLQATTVDNVTPEHWNKHPNNNHKNHNNRHNGNNNNEEHEYSGKGGRHCQNHPHHIDVKNSISNCKKTCEKDTFSKEPVPCNAADDVRFSPRSAHTIQHAMGTPFRYMPEGDIACQERLSTDRSQRGDPLPDSKSLNCTGDVPVSAQRCSFPHETSRNLEESFMAL.

Over 1 to 19 (MDMDRGFYRKVDVPDHAHY) the chain is Extracellular. The chain crosses the membrane as a helical span at residues 20 to 40 (VIAFFVLIIGVVGVTGNALVM). Over 41–56 (YAFLCNKKLRTPPNYF) the chain is Cytoplasmic. The chain crosses the membrane as a helical span at residues 57 to 77 (IMNLAVSDFLMAITQSPIFFI). The Extracellular portion of the chain corresponds to 78–93 (NSLFKEWIFGETGCRM). C91 and C169 are disulfide-bonded. The helical transmembrane segment at 94–114 (YAFCGALFGITSMINLLAISL) threads the bilayer. Residues 115-136 (DRYIVITKPPQAIRWVSGRRTM) lie on the Cytoplasmic side of the membrane. Residues 137–157 (VVILLVWLYSLAWSLAPLLGW) traverse the membrane as a helical segment. Residues 158–189 (SSYIPEGLMTSCTWDYVTSTPANKGYTLMLCC) are Extracellular-facing. The chain crosses the membrane as a helical span at residues 190 to 210 (FVFFIPLGIISYCYLCMFLAI). Topologically, residues 211–244 (RSAGREIERLGTQVRKSTLMQQQTIKTEWKLTKV) are cytoplasmic. Residues 245 to 265 (AFVVIIVYVHSWSPYACVTLI) traverse the membrane as a helical segment. Topologically, residues 266 to 279 (AWAGYGSHLSPYSK) are extracellular. A helical transmembrane segment spans residues 280-300 (AVPAVIAKASAIYNPFIYAII). Position 287 is an N6-(retinylidene)lysine (K287). Topologically, residues 301–615 (HSKYRDTLAE…RNLEESFMAL (315 aa)) are cytoplasmic. Disordered regions lie at residues 390-420 (LGRS…TVAD) and 465-502 (NKHP…QNHP). Over residues 401-415 (AQQNRQTRSSDTLEQ) the composition is skewed to polar residues. Residues 469–478 (NNNHKNHNNR) show a composition bias toward basic residues.

This sequence belongs to the G-protein coupled receptor 1 family. Opsin subfamily. Expressed in the inner nuclear layer of the retina, possibly in amacrine and ganglion cells. Expressed in a subpopulation of neurons in the dorsal habenula.

It is found in the cell membrane. Photoreceptor implicated in non-image-forming responses to light. The sequence is that of Melanopsin-B (opn4b) from Gadus morhua (Atlantic cod).